Consider the following 619-residue polypeptide: Pentatricopeptide repeat-containing protein At3g22470, mitochondrial (619 aa).

The transit peptide at 1 to 28 (MIQRLIPLNRKASNFTQILEKGTSLLHY) directs the protein to the mitochondrion. 15 PPR repeats span residues 69–103 (TPID…GIEH), 104–138 (DMYT…GYEP), 139–173 (DTIT…KQRP), 174–208 (DLVT…GFQP), 209–243 (DEVT…NIKA), 244–278 (SVVQ…GIKA), 279–313 (DVVT…NIIP), 314–348 (DVVT…GIAP), 349–383 (DTIT…GCEP), 384–418 (DIVT…GLIP), 419–453 (NTIT…GVPP), 454–488 (SVVT…RMTL), 489–523 (GIGI…GVKP), 524–558 (DVVT…GCTP), and 559–593 (DDFT…GFSA).

Belongs to the PPR family. P subfamily.

The protein resides in the mitochondrion. The polypeptide is Pentatricopeptide repeat-containing protein At3g22470, mitochondrial (Arabidopsis thaliana (Mouse-ear cress)).